We begin with the raw amino-acid sequence, 789 residues long: MTKPAADASAVLTAEDTLVLASTATPVEMELIMGWLGQQRARHPDSKFDILKLPPRNAPPAALTALVEQLEPGFASSPQSGEDRSIVPVRVIWLPPADRSRAGKVAALLPGRDPYHPSQRQQRRILRTDPRRARVVAGESAKVSELRQQWRDTTVAEHKRDFAQFVSRRALLALARAEYRILGPQYKSPRLVKPEMLASARFRAGLDRIPGATVEDAGKMLDELSTGWSQVSVDLVSVLGRLASRGFDPEFDYDEYQVAAMRAALEAHPAVLLFSHRSYIDGVVVPVAMQDNRLPPVHMFGGINLSFGLMGPLMRRSGMIFIRRNIGNDPLYKYVLKEYVGYVVEKRFNLSWSIEGTRSRTGKMLPPKLGLMSYVADAYLDGRSDDILLQGVSICFDQLHEITEYAAYARGAEKTPEGLRWLYNFIKAQGERNFGKIYVRFPEAVSMRQYLGAPHGELTQDPAAKRLALQKMSFEVAWRILQATPVTATGLVSALLLTTRGTALTLDQLHHTLQDSLDYLERKQSPVSTSALRLRSREGVRAAADALSNGHPVTRVDSGREPVWYIAPDDEHAAAFYRSSVIHAFLETSIVELALAHAKHAEGDRVAAFWAQAMRLRDLLKFDFYFADSTAFRANIAQEMAWHQDWEDHLGVGGNEIDAMLYAKRPLMSDAMLRVFFEAYEIVADVLRDAPPDIGPEELTELALGLGRQFVAQGRVRSSEPVSTLLFATARQVAVDQELIAPAADLAERRVAFRRELRNILRDFDYVEQIARNQFVAREFKARQGRDRI.

The HXXXXD motif motif lies at 276–281 (HRSYID).

The protein belongs to the GPAT/DAPAT family.

It is found in the cell membrane. It carries out the reaction sn-glycerol 3-phosphate + an acyl-CoA = a 1-acyl-sn-glycero-3-phosphate + CoA. Its pathway is phospholipid metabolism; CDP-diacylglycerol biosynthesis; CDP-diacylglycerol from sn-glycerol 3-phosphate: step 1/3. The protein is Glycerol-3-phosphate acyltransferase of Mycobacterium bovis (strain ATCC BAA-935 / AF2122/97).